A 460-amino-acid polypeptide reads, in one-letter code: Fumarate hydratase class II (460 aa).

Substrate is bound by residues 95 to 97 (SGT), 126 to 129 (HPND), 136 to 138 (SSN), and threonine 184. Histidine 185 acts as the Proton donor/acceptor in catalysis. Serine 315 is an active-site residue. Substrate contacts are provided by residues serine 316 and 321 to 323 (KVN).

This sequence belongs to the class-II fumarase/aspartase family. Fumarase subfamily. Homotetramer.

The protein resides in the cytoplasm. The enzyme catalyses (S)-malate = fumarate + H2O. It functions in the pathway carbohydrate metabolism; tricarboxylic acid cycle; (S)-malate from fumarate: step 1/1. Functionally, involved in the TCA cycle. Catalyzes the stereospecific interconversion of fumarate to L-malate. The sequence is that of Fumarate hydratase class II from Chlamydia pneumoniae (Chlamydophila pneumoniae).